Reading from the N-terminus, the 447-residue chain is Probable rhamnogalacturonase C (447 aa).

A signal peptide spans Met-1–Ala-19. N-linked (GlcNAc...) asparagine glycosylation is found at Asn-37 and Asn-65. The cysteines at positions 40 and 66 are disulfide-linked. The active-site Proton donor is Asp-217. An intrachain disulfide couples Cys-219 to Cys-236. 2 N-linked (GlcNAc...) asparagine glycosylation sites follow: Asn-237 and Asn-252. His-291 is an active-site residue. Asn-316 carries an N-linked (GlcNAc...) asparagine glycan. 2 cysteine pairs are disulfide-bonded: Cys-338/Cys-344 and Cys-366/Cys-375.

Belongs to the glycosyl hydrolase 28 family.

It localises to the secreted. Its function is as follows. Pectinolytic enzymes consist of four classes of enzymes: pectine lyase, polygalacturonase, pectin methylesterase and rhamnogalacturonase. Hydrolyzes alpha-D-galacturonopyranosyl-(1,2)-alpha-L-rhamnopyranosyl linkages in the backbone of the hairy regions of pectins. This Aspergillus flavus (strain ATCC 200026 / FGSC A1120 / IAM 13836 / NRRL 3357 / JCM 12722 / SRRC 167) protein is Probable rhamnogalacturonase C (rhgC).